The primary structure comprises 445 residues: Ribosomal protein uS12 methylthiotransferase RimO (445 aa).

Residues 11–121 (PKISFVSLGC…VLDAVHRASP (111 aa)) enclose the MTTase N-terminal domain. Residues Cys20, Cys56, Cys85, Cys152, Cys156, and Cys159 each coordinate [4Fe-4S] cluster. The Radical SAM core domain maps to 138–375 (LTPRHYAYLK…MARQQKISAR (238 aa)). The 67-residue stretch at 378-444 (KRKVGTRQQI…EYDLHGTVAG (67 aa)) folds into the TRAM domain.

Belongs to the methylthiotransferase family. RimO subfamily. It depends on [4Fe-4S] cluster as a cofactor.

It localises to the cytoplasm. The catalysed reaction is L-aspartate(89)-[ribosomal protein uS12]-hydrogen + (sulfur carrier)-SH + AH2 + 2 S-adenosyl-L-methionine = 3-methylsulfanyl-L-aspartate(89)-[ribosomal protein uS12]-hydrogen + (sulfur carrier)-H + 5'-deoxyadenosine + L-methionine + A + S-adenosyl-L-homocysteine + 2 H(+). Functionally, catalyzes the methylthiolation of an aspartic acid residue of ribosomal protein uS12. The polypeptide is Ribosomal protein uS12 methylthiotransferase RimO (Bradyrhizobium sp. (strain ORS 278)).